We begin with the raw amino-acid sequence, 339 residues long: DNA-directed RNA polymerase subunit alpha (339 aa).

An alpha N-terminal domain (alpha-NTD) region spans residues 1–235; it reads MTIQKNWQEL…DQLNVFVNFE (235 aa). Residues 251–339 form an alpha C-terminal domain (alpha-CTD) region; it reads FNPAFLKKVD…ELAKRFEDHY (89 aa).

The protein belongs to the RNA polymerase alpha chain family. As to quaternary structure, homodimer. The RNAP catalytic core consists of 2 alpha, 1 beta, 1 beta' and 1 omega subunit. When a sigma factor is associated with the core the holoenzyme is formed, which can initiate transcription.

It catalyses the reaction RNA(n) + a ribonucleoside 5'-triphosphate = RNA(n+1) + diphosphate. Its function is as follows. DNA-dependent RNA polymerase catalyzes the transcription of DNA into RNA using the four ribonucleoside triphosphates as substrates. The polypeptide is DNA-directed RNA polymerase subunit alpha (Afipia carboxidovorans (strain ATCC 49405 / DSM 1227 / KCTC 32145 / OM5) (Oligotropha carboxidovorans)).